An 859-amino-acid polypeptide reads, in one-letter code: Nitrate reductase [NADPH] (859 aa).

Residue cysteine 137 participates in Mo-molybdopterin binding. The Cytochrome b5 heme-binding domain occupies aspartate 502–glutamate 578. The heme site is built by histidine 538 and histidine 561. The region spanning arginine 602–valine 713 is the FAD-binding FR-type domain. Residues arginine 655 to threonine 658, leucine 672 to tyrosine 676, phenylalanine 677, isoleucine 687 to threonine 689, serine 737, and threonine 740 contribute to the FAD site. Methionine 829–methionine 838 serves as a coordination point for NADP(+).

The protein belongs to the nitrate reductase family. Homodimer. FAD serves as cofactor. Requires heme as cofactor. It depends on Mo-molybdopterin as a cofactor.

It carries out the reaction nitrite + NADP(+) + H2O = nitrate + NADPH + H(+). Nitrate reductase is a key enzyme involved in the first step of nitrate assimilation in plants, fungi and bacteria. In Pichia angusta (Yeast), this protein is Nitrate reductase [NADPH] (YNR1).